Here is a 310-residue protein sequence, read N- to C-terminus: MIFTGTANTRLAVDVVNHLDMSLGKMTVGRYSDGEVMVEINENVRGKDVFVLQPTCAPTNDNLMEIMVMVDALRRASAGRITAAIPYFGYARQDRRPRSARVAISAKVVANMLQVAGVDRVLTMDLHADQIQGFFDIPVDNIYAGPILLGDIWRRNFSNLVVVSPDIGGVVRARALAKQLEADLAIIDKRRPRANVSEVMNIIGEVDGRTCIIMDDMVDTAGTLCKAAQALKDRGAGAVYAYCTHPVLSGGAIERIETSSLDELVVTDTIPLSEQAQACGKIRQLSCAALLGETILRISNAESVSSLFAD.

Residues 33 to 35 (DGE) and 92 to 93 (RQ) contribute to the ATP site. Mg(2+)-binding residues include H127 and D166. K189 is a catalytic residue. D-ribose 5-phosphate is bound by residues R191, D215, and 219 to 223 (DTAGT).

This sequence belongs to the ribose-phosphate pyrophosphokinase family. Class I subfamily. As to quaternary structure, homohexamer. Requires Mg(2+) as cofactor.

The protein localises to the cytoplasm. It carries out the reaction D-ribose 5-phosphate + ATP = 5-phospho-alpha-D-ribose 1-diphosphate + AMP + H(+). It functions in the pathway metabolic intermediate biosynthesis; 5-phospho-alpha-D-ribose 1-diphosphate biosynthesis; 5-phospho-alpha-D-ribose 1-diphosphate from D-ribose 5-phosphate (route I): step 1/1. Involved in the biosynthesis of the central metabolite phospho-alpha-D-ribosyl-1-pyrophosphate (PRPP) via the transfer of pyrophosphoryl group from ATP to 1-hydroxyl of ribose-5-phosphate (Rib-5-P). This Bordetella pertussis (strain Tohama I / ATCC BAA-589 / NCTC 13251) protein is Ribose-phosphate pyrophosphokinase.